A 325-amino-acid chain; its full sequence is Tetraacyldisaccharide 4'-kinase (325 aa).

Residue 55–62 (TAGGNGKT) participates in ATP binding.

It belongs to the LpxK family.

It catalyses the reaction a lipid A disaccharide + ATP = a lipid IVA + ADP + H(+). The protein operates within glycolipid biosynthesis; lipid IV(A) biosynthesis; lipid IV(A) from (3R)-3-hydroxytetradecanoyl-[acyl-carrier-protein] and UDP-N-acetyl-alpha-D-glucosamine: step 6/6. Functionally, transfers the gamma-phosphate of ATP to the 4'-position of a tetraacyldisaccharide 1-phosphate intermediate (termed DS-1-P) to form tetraacyldisaccharide 1,4'-bis-phosphate (lipid IVA). The sequence is that of Tetraacyldisaccharide 4'-kinase from Salmonella paratyphi A (strain ATCC 9150 / SARB42).